A 470-amino-acid chain; its full sequence is Neuraminidase (470 aa).

The Intravirion portion of the chain corresponds to 1–14 (MNPNQKIITIGSVS). Positions 11-32 (GSVSLGLVVLNILLHIVSITIT) are involved in apical transport and lipid raft association. A helical transmembrane segment spans residues 15-35 (LGLVVLNILLHIVSITITVLV). Residues 32-86 (TVLVLPGNGNNPSCNETVIREYNETVRIERVTQWHNTNVIEYLERPESDHFMNNT) are hypervariable stalk region. Topologically, residues 36-470 (LPGNGNNPSC…AILPFDIDKM (435 aa)) are virion surface. 3 N-linked (GlcNAc...) asparagine; by host glycosylation sites follow: asparagine 46, asparagine 54, and asparagine 84. Positions 89-470 (LCDAKGFAPF…AILPFDIDKM (382 aa)) are head of neuraminidase. Cystine bridges form between cysteine 90–cysteine 417, cysteine 122–cysteine 127, cysteine 182–cysteine 229, cysteine 231–cysteine 236, cysteine 277–cysteine 290, cysteine 279–cysteine 288, cysteine 316–cysteine 335, and cysteine 421–cysteine 446. Residue arginine 116 coordinates substrate. The N-linked (GlcNAc...) asparagine; by host glycan is linked to asparagine 144. The active-site Proton donor/acceptor is aspartate 149. Substrate is bound at residue arginine 150. 275-276 (EE) provides a ligand contact to substrate. Arginine 291 is a binding site for substrate. Aspartate 292 contacts Ca(2+). Asparagine 293 carries an N-linked (GlcNAc...) asparagine; by host glycan. The Ca(2+) site is built by glycine 296 and aspartate 322. Position 368 (arginine 368) interacts with substrate. N-linked (GlcNAc...) asparagine; by host glycosylation is present at asparagine 398. Tyrosine 402 functions as the Nucleophile in the catalytic mechanism.

Belongs to the glycosyl hydrolase 34 family. Homotetramer. Ca(2+) is required as a cofactor. N-glycosylated.

The protein resides in the virion membrane. The protein localises to the host apical cell membrane. The catalysed reaction is Hydrolysis of alpha-(2-&gt;3)-, alpha-(2-&gt;6)-, alpha-(2-&gt;8)- glycosidic linkages of terminal sialic acid residues in oligosaccharides, glycoproteins, glycolipids, colominic acid and synthetic substrates.. With respect to regulation, inhibited by the neuraminidase inhibitors zanamivir (Relenza) and oseltamivir (Tamiflu). These drugs interfere with the release of progeny virus from infected cells and are effective against all influenza strains. Resistance to neuraminidase inhibitors is quite rare. In terms of biological role, catalyzes the removal of terminal sialic acid residues from viral and cellular glycoconjugates. Cleaves off the terminal sialic acids on the glycosylated HA during virus budding to facilitate virus release. Additionally helps virus spread through the circulation by further removing sialic acids from the cell surface. These cleavages prevent self-aggregation and ensure the efficient spread of the progeny virus from cell to cell. Otherwise, infection would be limited to one round of replication. Described as a receptor-destroying enzyme because it cleaves a terminal sialic acid from the cellular receptors. May facilitate viral invasion of the upper airways by cleaving the sialic acid moieties on the mucin of the airway epithelial cells. Likely to plays a role in the budding process through its association with lipid rafts during intracellular transport. May additionally display a raft-association independent effect on budding. Plays a role in the determination of host range restriction on replication and virulence. Sialidase activity in late endosome/lysosome traffic seems to enhance virus replication. The protein is Neuraminidase of Aves.